Consider the following 690-residue polypeptide: Tripartite terminase subunit 3 (690 aa).

The short motif at 226-233 is the Walker A motif element; sequence IPRRHGKT. The Walker B motif motif lies at 321-326; the sequence is LLFVDE. Glu326 functions as the For ATPase activity in the catalytic mechanism. Catalysis depends on for nuclease activity residues Asp481, Glu555, and Asp667.

This sequence belongs to the herpesviridae TRM3 protein family. In terms of assembly, interacts with the terminase subunits TRM1 and TRM2. Interacts with portal protein.

It localises to the host nucleus. Functionally, component of the molecular motor that translocates viral genomic DNA in empty capsid during DNA packaging. Forms a tripartite terminase complex together with TRM1 and TRM2 in the host cytoplasm. Once the complex reaches the host nucleus, it interacts with the capsid portal vertex. This portal forms a ring in which genomic DNA is translocated into the capsid. TRM3 carries an RNase H-like nuclease activity that plays an important role for the cleavage of concatemeric viral DNA into unit length genomes. In Homo sapiens (Human), this protein is Tripartite terminase subunit 3.